The primary structure comprises 86 residues: Small ribosomal subunit protein bS20 (86 aa).

The span at 1–11 (MANIKSQIKRN) shows a compositional bias: polar residues. The segment at 1-20 (MANIKSQIKRNLTNEKRHQA) is disordered.

Belongs to the bacterial ribosomal protein bS20 family.

Functionally, binds directly to 16S ribosomal RNA. In Acholeplasma laidlawii (strain PG-8A), this protein is Small ribosomal subunit protein bS20.